Here is a 121-residue protein sequence, read N- to C-terminus: Basic phospholipase A2 homolog piratoxin-2 (121 aa).

7 disulfide bridges follow: Cys-26/Cys-115, Cys-28/Cys-44, Cys-43/Cys-95, Cys-49/Cys-121, Cys-50/Cys-88, Cys-57/Cys-81, and Cys-75/Cys-86. The tract at residues 105 to 117 is important for membrane-damaging activities in eukaryotes and bacteria; heparin-binding; it reads KKYRYHLKPFCKK.

This sequence belongs to the phospholipase A2 family. Group II subfamily. K49 sub-subfamily. In terms of assembly, homodimer; non-covalently linked. In terms of tissue distribution, expressed by the venom gland.

It localises to the secreted. Snake venom phospholipase A2 (PLA2) homolog that lacks enzymatic activity. Shows myotoxic activity and edema-inducing activities in vivo. A model of myotoxic mechanism has been proposed: an apo Lys49-PLA2 is activated by the entrance of a hydrophobic molecule (e.g. fatty acid) at the hydrophobic channel of the protein leading to a reorientation of a monomer. This reorientation causes a transition between 'inactive' to 'active' states, causing alignment of C-terminal and membrane-docking sites (MDoS) side-by-side and putting the membrane-disruption sites (MDiS) in the same plane, exposed to solvent and in a symmetric position for both monomers. The MDoS region stabilizes the toxin on membrane by the interaction of charged residues with phospholipid head groups. Subsequently, the MDiS region destabilizes the membrane with penetration of hydrophobic residues. This insertion causes a disorganization of the membrane, allowing an uncontrolled influx of ions (i.e. calcium and sodium), and eventually triggering irreversible intracellular alterations and cell death. In Bothrops pirajai (Piraja's lancehead), this protein is Basic phospholipase A2 homolog piratoxin-2.